We begin with the raw amino-acid sequence, 517 residues long: Ribose import ATP-binding protein RbsA 2 (517 aa).

2 ABC transporter domains span residues 11–251 (LEMR…VGRD) and 263–507 (YDPG…ALAT). Position 43–50 (43–50 (GENGAGKS)) interacts with ATP.

This sequence belongs to the ABC transporter superfamily. Ribose importer (TC 3.A.1.2.1) family. The complex is composed of an ATP-binding protein (RbsA), two transmembrane proteins (RbsC) and a solute-binding protein (RbsB).

The protein resides in the cell inner membrane. The enzyme catalyses D-ribose(out) + ATP + H2O = D-ribose(in) + ADP + phosphate + H(+). In terms of biological role, part of the ABC transporter complex RbsABC involved in ribose import. Responsible for energy coupling to the transport system. The sequence is that of Ribose import ATP-binding protein RbsA 2 from Burkholderia pseudomallei (strain 1710b).